The primary structure comprises 124 residues: Nascent polypeptide-associated complex protein (124 aa).

Residues Gly7 to Gly74 form the NAC-A/B domain. The segment at Ala53–Glu124 is disordered. Over residues Gly74–Glu93 the composition is skewed to acidic residues.

This sequence belongs to the NAC-alpha family. As to quaternary structure, homodimer. Interacts with the ribosome. Binds ribosomal RNA.

Its function is as follows. Contacts the emerging nascent chain on the ribosome. The protein is Nascent polypeptide-associated complex protein of Natronomonas pharaonis (strain ATCC 35678 / DSM 2160 / CIP 103997 / JCM 8858 / NBRC 14720 / NCIMB 2260 / Gabara) (Halobacterium pharaonis).